We begin with the raw amino-acid sequence, 56 residues long: Large ribosomal subunit protein bL32 (56 aa).

The disordered stretch occupies residues 1 to 34 (MAVQQNKPTRSKRGMRRSHDALTTSTVSVDKASG).

The protein belongs to the bacterial ribosomal protein bL32 family.

The chain is Large ribosomal subunit protein bL32 from Sodalis glossinidius (strain morsitans).